A 181-amino-acid chain; its full sequence is Crossover junction endodeoxyribonuclease RuvC (181 aa).

Residues aspartate 8, glutamate 67, and aspartate 139 contribute to the active site. Mg(2+) contacts are provided by aspartate 8, glutamate 67, and aspartate 139.

The protein belongs to the RuvC family. Homodimer which binds Holliday junction (HJ) DNA. The HJ becomes 2-fold symmetrical on binding to RuvC with unstacked arms; it has a different conformation from HJ DNA in complex with RuvA. In the full resolvosome a probable DNA-RuvA(4)-RuvB(12)-RuvC(2) complex forms which resolves the HJ. Mg(2+) serves as cofactor.

It is found in the cytoplasm. The catalysed reaction is Endonucleolytic cleavage at a junction such as a reciprocal single-stranded crossover between two homologous DNA duplexes (Holliday junction).. The RuvA-RuvB-RuvC complex processes Holliday junction (HJ) DNA during genetic recombination and DNA repair. Endonuclease that resolves HJ intermediates. Cleaves cruciform DNA by making single-stranded nicks across the HJ at symmetrical positions within the homologous arms, yielding a 5'-phosphate and a 3'-hydroxyl group; requires a central core of homology in the junction. The consensus cleavage sequence is 5'-(A/T)TT(C/G)-3'. Cleavage occurs on the 3'-side of the TT dinucleotide at the point of strand exchange. HJ branch migration catalyzed by RuvA-RuvB allows RuvC to scan DNA until it finds its consensus sequence, where it cleaves and resolves the cruciform DNA. This chain is Crossover junction endodeoxyribonuclease RuvC, found in Acinetobacter baumannii (strain SDF).